The following is a 235-amino-acid chain: Small ribosomal subunit protein uS3 (235 aa).

One can recognise a KH type-2 domain in the interval 39–107 (VRKFLNKELA…PAQINIAEVK (69 aa)). The tract at residues 215-235 (AQPEQQPADKPKKAPRGKGRK) is disordered.

Belongs to the universal ribosomal protein uS3 family. In terms of assembly, part of the 30S ribosomal subunit. Forms a tight complex with proteins S10 and S14.

Binds the lower part of the 30S subunit head. Binds mRNA in the 70S ribosome, positioning it for translation. The sequence is that of Small ribosomal subunit protein uS3 from Pasteurella multocida (strain Pm70).